The sequence spans 112 residues: Putative transposase YkgN (112 aa).

The protein belongs to the transposase 8 family.

The chain is Putative transposase YkgN (ykgN) from Escherichia coli (strain K12).